The primary structure comprises 530 residues: GATA zinc finger domain-containing protein 4 (530 aa).

Disordered regions lie at residues Met-1–Asn-27 and Ser-212–Asn-386. Low complexity-rich tracts occupy residues Asn-7–Asn-17, Ser-216–Asn-290, and Asn-299–Asn-386. The GATA-type zinc finger occupies Cys-494–Cys-518.

This Dictyostelium discoideum (Social amoeba) protein is GATA zinc finger domain-containing protein 4 (gtaD).